The following is a 228-amino-acid chain: MKKAVVLLSGGLDSTTCLALAKSQGFACYALSFSYGQRHSAELCAATRIAKHMGAADHKIVTLDTALFGGSALTDASIEVPEFKESPEIPVTYVPARNTIFLAMALGYAESIGARDIFIGASSVDYSHYPDCRPEFIESFQSLANLATKAGIEGDRFTINAPLQYLSKVQAIQLGTELGVDYGLTVSCYQANEAGEACGQCDSCTFRKRGFKSAGVDDPTRYQKCVHI.

8-18 provides a ligand contact to ATP; that stretch reads LSGGLDSTTCL. Residues Cys-188, Cys-198, Cys-201, and Cys-204 each coordinate Zn(2+).

It belongs to the QueC family. The cofactor is Zn(2+).

The catalysed reaction is 7-carboxy-7-deazaguanine + NH4(+) + ATP = 7-cyano-7-deazaguanine + ADP + phosphate + H2O + H(+). Its pathway is purine metabolism; 7-cyano-7-deazaguanine biosynthesis. Its function is as follows. Catalyzes the ATP-dependent conversion of 7-carboxy-7-deazaguanine (CDG) to 7-cyano-7-deazaguanine (preQ(0)). In Legionella pneumophila (strain Paris), this protein is 7-cyano-7-deazaguanine synthase.